A 198-amino-acid chain; its full sequence is Beta-crystallin A1 (198 aa).

The segment at 1-13 (MLYLVLFLVPFNS) is N-terminal arm. Beta/gamma crystallin 'Greek key' domains are found at residues 14–53 (IQIT…KVEC) and 54–100 (GAWI…RPIC). Cys65 and Cys100 each carry S-glutathionyl cysteine; alternate. S-methylcysteine; alternate is present on residues Cys65 and Cys100. The tract at residues 101–106 (SANHKE) is connecting peptide. Beta/gamma crystallin 'Greek key' domains follow at residues 107–148 (SKIT…KIQC) and 149–197 (GAWV…RRIQ).

It belongs to the beta/gamma-crystallin family. In terms of assembly, homo/heterodimer, or complexes of higher-order. The structure of beta-crystallin oligomers seems to be stabilized through interactions between the N-terminal arms. Interacts with CRYBA1.

Functionally, crystallins are the dominant structural components of the vertebrate eye lens. The chain is Beta-crystallin A1 from Mus musculus (Mouse).